The primary structure comprises 313 residues: MNATEQAANGDRGTTRSAGGRLRYLLHAPGACQLMGVHDGLSARIAVAEGFEALWASGLCMSTARGVRDSDEASWTELLTLVGTMTDAVPGVPVLVDGDTGYGNFNTARRFAGRAERVGAAGVCFEDKVFPKMNSFFGDGHQLAPVAEFCGKIRACKDAQRDPDFVVVARTEALISKLPMEEALDRAAAYAEAGADALFIHSRMNTPQQIATFMERWEGSTPVLIAPTTYHTPSVDDFAALGIAGCIWANHSMRAAFAAMRDVCQRIRTDRGIYGIEDQVAPLKEIFGLFDYEGLEKDENCYTQAPDLAAVQG.

The Nucleophile role is filled by D69.

Belongs to the isocitrate lyase/PEP mutase superfamily. PEP mutase family.

The enzyme catalyses phosphoenolpyruvate + H(+) = 3-phosphonopyruvate. The protein operates within secondary metabolite biosynthesis; bialaphos biosynthesis. In terms of biological role, formation of a carbon-phosphorus bond by converting phosphoenolpyruvate (PEP) to phosphonopyruvate (P-Pyr). The protein is Phosphoenolpyruvate phosphomutase (bcpB) of Streptomyces hygroscopicus.